A 472-amino-acid chain; its full sequence is MSKIKTRFAPSPTGYLHVGGARTALYSWLFSRHNKGEFVLRIEDTDLERSTQPAIDAIMDGMNWLNLNWDEGPYYQTKRFDRYNQVIDQMLAAGTAYRCYCSKERLEKLREDQMAKGEKPRYDGCCRHGDHNHTPDEPHVVRFLNPQEGSVIFNDKIRGPIEFSNQELDDLIIRRTDGSPTYNFCVVIDDWDMEITHVIRGEDHINNTPRQINILKALGAPVPEYAHVSMILGDDGKKLSKRYNAVSVMQYRDDGYLPEALLNYLVRLGWSHGDQEIFSIDEMIKDFTLEAISKSASAFNTDKLLWLNHHYINTLPAEQVAVHLDWHIKQQNIDTSNGPSLVELIKLLGERCKTLKEMAESCHYFYVDFDSFEETAAKKHLRPVARQPLEVVRDKLSAITDWTAENVHKAIQETAEELEVGMGKVGMPLRVAVTGAGQSPALDVTVHAIGKARSIARINKALDFITDRENQA.

Positions 10 to 20 (PSPTGYLHVGG) match the 'HIGH' region motif. Zn(2+) is bound by residues Cys99, Cys101, Cys126, and His128. The 'KMSKS' region motif lies at 238–242 (KLSKR). Lys241 provides a ligand contact to ATP.

Belongs to the class-I aminoacyl-tRNA synthetase family. Glutamate--tRNA ligase type 1 subfamily. As to quaternary structure, monomer. The cofactor is Zn(2+).

The protein localises to the cytoplasm. It carries out the reaction tRNA(Glu) + L-glutamate + ATP = L-glutamyl-tRNA(Glu) + AMP + diphosphate. In terms of biological role, catalyzes the attachment of glutamate to tRNA(Glu) in a two-step reaction: glutamate is first activated by ATP to form Glu-AMP and then transferred to the acceptor end of tRNA(Glu). The protein is Glutamate--tRNA ligase of Proteus mirabilis (strain HI4320).